The chain runs to 304 residues: Non-specific ribonucleoside hydrolase RihC (304 aa).

His-233 is a catalytic residue.

This sequence belongs to the IUNH family. RihC subfamily.

Its function is as follows. Hydrolyzes both purine and pyrimidine ribonucleosides with a broad-substrate specificity. The sequence is that of Non-specific ribonucleoside hydrolase RihC from Escherichia coli O7:K1 (strain IAI39 / ExPEC).